The primary structure comprises 364 residues: DNA replication and repair protein RecF (364 aa).

30 to 37 (GNNGMGKT) serves as a coordination point for ATP.

This sequence belongs to the RecF family.

It is found in the cytoplasm. Its function is as follows. The RecF protein is involved in DNA metabolism; it is required for DNA replication and normal SOS inducibility. RecF binds preferentially to single-stranded, linear DNA. It also seems to bind ATP. The polypeptide is DNA replication and repair protein RecF (Porphyromonas gingivalis (strain ATCC BAA-308 / W83)).